The sequence spans 281 residues: Gas vesicle protein L1 (281 aa).

This sequence belongs to the gas vesicle GvpF/GvpL family. In terms of assembly, may form oligomers. GvpF to GvpM interact with each other in vitro, and may form multi-subunit complex(es). Interacts with GvpC1, GvpN1 and GvpO1.

It is found in the gas vesicle. The protein resides in the cytoplasm. Its function is as follows. Proteins GvpF to GvpM might be involved in nucleating gas vesicle formation. A minor component of the gas vesicle. This the only minor gas vesicle protein that binds all the others (including GvpC1, GvpN1 and GvpO1, but not GvpA1), suggesting it might be able to assemble them. Gas vesicles are hollow, gas filled proteinaceous nanostructures found in several microbial planktonic microorganisms. They allow positioning of halobacteria at the optimal depth for growth in the poorly aerated, shallow brine pools of their habitat. Functionally, expression of a 9.5 kb p-vac DNA fragment containing 2 divergently transcribed regions (gvpD-gvpE-gvpF-gvpG-gvpH-gvpI-gvpJ-gvpK-gvpL-gvpM and gvpA-gvpC-gvpN-gvpO) allows H.volcanii to produce gas vesicles. A minimal gas vesicle can be made in H.volcanii by gvpA1-gvpO1 plus gvpF1-gvpG1-gvpJ1-gvpK1-gvpL1-gvpM1; lack of enough GvpJ1 prevents their formation. A similar region restores gas vesicle production in H.halobium without the p-vac locus, but it still has the c-vac locus. This Halobacterium salinarum (strain ATCC 700922 / JCM 11081 / NRC-1) (Halobacterium halobium) protein is Gas vesicle protein L1 (gvpL11).